Here is a 67-residue protein sequence, read N- to C-terminus: Large ribosomal subunit protein uL29 (67 aa).

This sequence belongs to the universal ribosomal protein uL29 family.

This is Large ribosomal subunit protein uL29 from Desulfitobacterium hafniense (strain Y51).